The sequence spans 517 residues: NEDD8-activating enzyme E1 regulatory subunit (517 aa).

It belongs to the ubiquitin-activating E1 family. ULA1 subfamily. Heterodimer of uba3 and ula1. The complex binds NEDD8/ubl1 and ubc12.

The protein localises to the cytoplasm. It is found in the nucleus. It participates in protein modification; protein neddylation. Regulatory subunit of the dimeric uba3-ula1 E1 enzyme. E1 activates NEDD8/ubl1 by first adenylating its C-terminal glycine residue with ATP, thereafter linking this residue to the side chain of the catalytic cysteine, yielding a NEDD8-UBA3 thioester and free AMP. E1 finally transfers NEDD8 to the catalytic cysteine of ubc12. This Schizosaccharomyces pombe (strain 972 / ATCC 24843) (Fission yeast) protein is NEDD8-activating enzyme E1 regulatory subunit (uba5).